A 961-amino-acid chain; its full sequence is SH3 domain-binding protein 4 (961 aa).

In terms of domain architecture, SH3 1 spans 55–114 (GNAKEVIAIKDYCPNNFTTLKFSKGDHLYVLDTSGGEWWYAHNTTEMGYIPSSYVQPLNY). Phosphoserine is present on residues S131, S244, S249, S277, and S294. The ZU5 domain maps to 315 to 452 (TNIVCKLDSS…LEPCMYLAIV (138 aa)). Residue S635 is modified to Phosphoserine. One can recognise an SH3 2 domain in the interval 652–722 (SSLKFGKLLK…HTKNVLVVGK (71 aa)).

As to quaternary structure, homodimer or homooligomer. Interacts with DNM2, EPS15, clathrin, the adapter protein complex 2/AP-2 and TFRC. Interacts with the Rag GTPases RRAGA, RRAGB, RRAGC and RRAGD; the interaction is most probably direct, preferentially occurs with their inactive GDP-bound form and is negatively regulated by amino acids. Phosphorylated upon EGF stimulation. Phosphorylation prevents interaction with DNM2.

It localises to the membrane. The protein resides in the clathrin-coated pit. It is found in the cytoplasmic vesicle. Its subcellular location is the clathrin-coated vesicle. The protein localises to the nucleus. Functionally, may function in transferrin receptor internalization at the plasma membrane through a cargo-specific control of clathrin-mediated endocytosis. Alternatively, may act as a negative regulator of the amino acid-induced TOR signaling by inhibiting the formation of active Rag GTPase complexes. Preferentially binds inactive Rag GTPase complexes and prevents their interaction with the mTORC1 complex inhibiting its relocalization to lysosomes and its activation. Thereby, may indirectly regulate cell growth, proliferation and autophagy. The protein is SH3 domain-binding protein 4 (Sh3bp4) of Rattus norvegicus (Rat).